The following is a 298-amino-acid chain: 4-hydroxy-tetrahydrodipicolinate synthase (298 aa).

Pyruvate is bound at residue Thr-48. Tyr-137 serves as the catalytic Proton donor/acceptor. The active-site Schiff-base intermediate with substrate is Lys-166. Ile-207 is a pyruvate binding site.

The protein belongs to the DapA family. As to quaternary structure, homotetramer; dimer of dimers.

Its subcellular location is the cytoplasm. It carries out the reaction L-aspartate 4-semialdehyde + pyruvate = (2S,4S)-4-hydroxy-2,3,4,5-tetrahydrodipicolinate + H2O + H(+). The protein operates within amino-acid biosynthesis; L-lysine biosynthesis via DAP pathway; (S)-tetrahydrodipicolinate from L-aspartate: step 3/4. Catalyzes the condensation of (S)-aspartate-beta-semialdehyde [(S)-ASA] and pyruvate to 4-hydroxy-tetrahydrodipicolinate (HTPA). This Campylobacter hominis (strain ATCC BAA-381 / DSM 21671 / CCUG 45161 / LMG 19568 / NCTC 13146 / CH001A) protein is 4-hydroxy-tetrahydrodipicolinate synthase.